A 660-amino-acid polypeptide reads, in one-letter code: Translation factor GUF1 homolog, mitochondrial (660 aa).

Residues 62-243 (EKIRNFSIIA…TIIEKIPPPT (182 aa)) form the tr-type G domain. GTP is bound by residues 71-78 (AHIDHGKS), 136-140 (DTPGH), and 190-193 (NKID).

The protein belongs to the TRAFAC class translation factor GTPase superfamily. Classic translation factor GTPase family. LepA subfamily.

Its subcellular location is the mitochondrion inner membrane. It catalyses the reaction GTP + H2O = GDP + phosphate + H(+). Functionally, promotes mitochondrial protein synthesis. May act as a fidelity factor of the translation reaction, by catalyzing a one-codon backward translocation of tRNAs on improperly translocated ribosomes. Binds to mitochondrial ribosomes in a GTP-dependent manner. The chain is Translation factor GUF1 homolog, mitochondrial from Trichoplax adhaerens (Trichoplax reptans).